A 91-amino-acid chain; its full sequence is M-myrmeciitoxin-Mb3a (91 aa).

The first 21 residues, 1–21 (MKLSCLSLALAIILILAIVHS), serve as a signal peptide directing secretion. Residues 22–54 (PNMEVKALADPEADAFGEANAFGEADAFAEANA) constitute a propeptide that is removed on maturation.

Homodimer; disulfide-linked. In terms of tissue distribution, expressed by the venom gland and reservoir.

Its subcellular location is the secreted. Its function is as follows. Causes a significant and dose-dependent histamine release, probably by influencing the signal transduction of mast cells through a non-IgE-mediated pathway. This peptide does not have cytotoxic activities. The chain is M-myrmeciitoxin-Mb3a from Myrmecia banksi (Jack jumper ant).